We begin with the raw amino-acid sequence, 309 residues long: Mitochondrial brown fat uncoupling protein 1 (309 aa).

Over 2–10 the chain is Mitochondrial intermembrane; it reads VGHTESDVP. A helical membrane pass occupies residues 11 to 32; that stretch reads PTMAVKIFSAGVAACVADIITF. Solcar repeat units follow at residues 11–106, 113–203, and 212–297; these read PTMA…VQEF, ASLG…MKEA, and DDVP…LKQE. Over 33 to 77 the chain is Mitochondrial matrix; that stretch reads PLDTAKVRLQVGSAIQGECLISSAIRYKGVLGTIITLAKTEGPVK. Residue lysine 60 participates in fatty acid 16:0 binding. A helical membrane pass occupies residues 78 to 100; the sequence is LYSGLPAGLQRQISFASLRIGLY. The Mitochondrial intermembrane portion of the chain corresponds to 101–118; it reads DTVQEFFTTGKEASLGSK. The helical transmembrane segment at 119–135 threads the bilayer; the sequence is ISAGLMTGGVAVFIGQP. Residues 136–180 lie on the Mitochondrial matrix side of the membrane; it reads TEVVKVRLQAQSHLHGPKPRYTGTYNAYRIIATTEGLTGLWKGTT. The helical transmembrane segment at 181–197 threads the bilayer; it reads PNLTRNVIINCTELVTY. Residues 198-214 are Mitochondrial intermembrane-facing; the sequence is DLMKEALVKNKLLADDV. A helical membrane pass occupies residues 215-234; sequence PCHFVSAVVAGFCTTVLSSP. The Mitochondrial matrix segment spans residues 235-268; the sequence is VDVVKTRFVNSSPGQYTSVPNCAMMMLTREGPSA. At cysteine 256 the chain carries Cysteine sulfenic acid (-SOH). The chain crosses the membrane as a helical span at residues 269–291; sequence FFKGFVPSFLRLGSWNIIMFVCF. Lysine 271 is a binding site for fatty acid 16:0. The Mitochondrial intermembrane segment spans residues 292–309; the sequence is EQLKQELMKSRHTMDCAT.

The protein belongs to the mitochondrial carrier (TC 2.A.29) family. As to quaternary structure, most probably functions as a monomer. Binds one purine nucleotide per monomer. However, has also been suggested to function as a homodimer or a homotetramer. Tightly associates with cardiolipin in the mitochondrion inner membrane; may stabilize and regulate its activity. Post-translationally, may undergo sulfenylation upon cold exposure. May increase the sensitivity of UCP1 thermogenic function to the activation by noradrenaline probably through structural effects. May undergo ubiquitin-mediated proteasomal degradation.

The protein localises to the mitochondrion inner membrane. The enzyme catalyses H(+)(in) = H(+)(out). Has no constitutive proton transporter activity and has to be activated by long-chain fatty acids/LCFAs. Inhibited by purine nucleotides. Both purine nucleotides and LCFAs bind the cytosolic side of the transporter and directly compete to activate or inhibit it. Activated by noradrenaline and reactive oxygen species. Despite lacking canonical translational encoding for selenocysteine, a small pool of the protein has been observed to selectively incorporate selenocysteine at 'Cys-256'. Selenocysteine-modified protein is highly sensitive to redox modification and may constitute a pool of protein highly sensitive to activation by elevated levels of reactive oxygen species (ROS). In terms of biological role, mitochondrial protein responsible for thermogenic respiration, a specialized capacity of brown adipose tissue and beige fat that participates in non-shivering adaptive thermogenesis to temperature and diet variations and more generally to the regulation of energy balance. Functions as a long-chain fatty acid/LCFA and proton symporter, simultaneously transporting one LCFA and one proton through the inner mitochondrial membrane. However, LCFAs remaining associated with the transporter via their hydrophobic tails, it results in an apparent transport of protons activated by LCFAs. Thereby, dissipates the mitochondrial proton gradient and converts the energy of substrate oxydation into heat instead of ATP. Regulates the production of reactive oxygen species/ROS by mitochondria. The polypeptide is Mitochondrial brown fat uncoupling protein 1 (Bos taurus (Bovine)).